The primary structure comprises 107 residues: U1-lycotoxin-Ls1a (107 aa).

The N-terminal stretch at 1-20 (MMKVLVVVALLVTLISYSSS) is a signal peptide. Positions 21-41 (EGIDDLEADELLSLMANEQTR) are excised as a propeptide. Disulfide bonds link Cys44-Cys59, Cys51-Cys68, Cys58-Cys86, and Cys70-Cys84.

This sequence belongs to the neurotoxin 19 (CSTX) family. 04 (U1-Lctx) subfamily. As to expression, expressed by the venom gland.

The protein localises to the secreted. In Lycosa singoriensis (Wolf spider), this protein is U1-lycotoxin-Ls1a.